The chain runs to 160 residues: E3 ubiquitin ligase complex SCF subunit sconC (160 aa).

The segment at 101-160 is interaction with the F-box domain of F-box proteins; that stretch reads ILAANYLDIKALLDVGCKTVANMIKGKSPEEIRKTFNIQNDFTPEEEDQIRRENEWAEDR.

The protein belongs to the SKP1 family. Component of the SCF (SKP1-CUL1-F-box protein) E3 ubiquitin ligase complexes.

The protein operates within protein modification; protein ubiquitination. In terms of biological role, essential component of the SCF (SKP1-CUL1-F-box protein) E3 ubiquitin ligase complexes, which mediate the ubiquitination and subsequent proteasomal degradation of target proteins. Controls sulfur metabolite repression, probably by mediating the inactivation or degradation of the metR transcription factor. The chain is E3 ubiquitin ligase complex SCF subunit sconC (sconC) from Talaromyces marneffei (strain ATCC 18224 / CBS 334.59 / QM 7333) (Penicillium marneffei).